A 555-amino-acid chain; its full sequence is Potassium-transporting ATPase potassium-binding subunit (555 aa).

10 helical membrane passes run 2–22, 60–80, 130–150, 173–193, 246–266, 278–298, 374–394, 412–432, 483–503, and 525–545; these read IWVA…PTGI, QYAL…YFIF, IGIT…VMAF, VFLP…VPQT, MSNI…PFTY, ILFV…TTSE, AGFV…GLMV, LIAV…ALAL, LVMF…AASL, and GIFI…MLVL.

It belongs to the KdpA family. In terms of assembly, the system is composed of three essential subunits: KdpA, KdpB and KdpC.

Its subcellular location is the cell membrane. In terms of biological role, part of the high-affinity ATP-driven potassium transport (or Kdp) system, which catalyzes the hydrolysis of ATP coupled with the electrogenic transport of potassium into the cytoplasm. This subunit binds the extracellular potassium ions and delivers the ions to the membrane domain of KdpB through an intramembrane tunnel. In Bacillus anthracis (strain A0248), this protein is Potassium-transporting ATPase potassium-binding subunit.